The primary structure comprises 290 residues: Outer dense fiber protein 4 (290 aa).

Serine 28 bears the Phosphoserine mark. The next 4 membrane-spanning stretches (helical) occupy residues 44-64 (AQVV…VMVF), 125-145 (PVFG…FVLT), 164-184 (LIGI…LLLF), and 201-221 (IGWS…CGIL). The disordered stretch occupies residues 247 to 290 (GPESLVSPSQTPSSQENSQESPKDDQKPSSPDKVVSPPQPDTTG). Polar residues predominate over residues 252-266 (VSPSQTPSSQENSQE).

In terms of tissue distribution, expressed in testis.

Its subcellular location is the membrane. Component of the outer dense fibers (ODF) of spermatozoa which could be involved in sperm tail structure, sperm movement and general organization of cellular cytoskeleton. This Mus musculus (Mouse) protein is Outer dense fiber protein 4 (Odf4).